A 103-amino-acid chain; its full sequence is Small ribosomal subunit protein bS18 (103 aa).

A compositionally biased stretch (basic and acidic residues) spans 1–19; sequence MSEERTERPERTERPERPQ. Residues 1-33 form a disordered region; it reads MSEERTERPERTERPERPQQRGSGPRKRRPFQR. Positions 24–33 are enriched in basic residues; sequence GPRKRRPFQR.

It belongs to the bacterial ribosomal protein bS18 family. In terms of assembly, part of the 30S ribosomal subunit. Forms a tight heterodimer with protein bS6.

In terms of biological role, binds as a heterodimer with protein bS6 to the central domain of the 16S rRNA, where it helps stabilize the platform of the 30S subunit. The polypeptide is Small ribosomal subunit protein bS18 (Geobacter sulfurreducens (strain ATCC 51573 / DSM 12127 / PCA)).